The following is a 298-amino-acid chain: GTPase Era (298 aa).

The region spanning 3 to 170 (KSGFVAILGR…IKLLTDNLEE (168 aa)) is the Era-type G domain. A G1 region spans residues 11 to 18 (GRPNVGKS). Residue 11–18 (GRPNVGKS) coordinates GTP. The interval 37–41 (QTTRN) is G2. Residues 58 to 61 (DTPG) form a G3 region. GTP-binding positions include 58 to 62 (DTPGI) and 120 to 123 (NKID). Residues 120 to 123 (NKID) form a G4 region. The tract at residues 149-151 (ISA) is G5. The region spanning 201 to 279 (TQQEVPHSVA…YLETWVKVKK (79 aa)) is the KH type-2 domain.

The protein belongs to the TRAFAC class TrmE-Era-EngA-EngB-Septin-like GTPase superfamily. Era GTPase family. In terms of assembly, monomer.

It localises to the cytoplasm. It is found in the cell membrane. Functionally, an essential GTPase that binds both GDP and GTP, with rapid nucleotide exchange. Plays a role in 16S rRNA processing and 30S ribosomal subunit biogenesis and possibly also in cell cycle regulation and energy metabolism. The sequence is that of GTPase Era from Streptococcus pyogenes serotype M2 (strain MGAS10270).